The chain runs to 353 residues: T-complex protein 1 subunit eta (353 aa).

The protein belongs to the TCP-1 chaperonin family. In terms of assembly, heterooligomeric complex of about 850 to 900 kDa that forms two stacked rings, 12 to 16 nm in diameter.

The protein localises to the cytoplasm. Molecular chaperone; assists the folding of proteins upon ATP hydrolysis. Known to play a role, in vitro, in the folding of actin and tubulin. In Tetrahymena thermophila, this protein is T-complex protein 1 subunit eta.